Reading from the N-terminus, the 141-residue chain is Hemoglobin subunit alpha-D (141 aa).

Residues 1–141 (MLSADEKQLI…VSDVLAEKYR (141 aa)) form the Globin domain. Residues H58 and H87 each coordinate heme b.

Belongs to the globin family. In terms of assembly, heterotetramer of two alpha-D chains and two beta chains. In terms of tissue distribution, red blood cells.

Functionally, involved in oxygen transport from the lung to the various peripheral tissues. The chain is Hemoglobin subunit alpha-D (HBAD) from Phrynops hilarii (Snake-necked turtle).